The chain runs to 310 residues: ADP-L-glycero-D-manno-heptose-6-epimerase (310 aa).

NADP(+)-binding positions include 10 to 11 (FI), 31 to 32 (DN), K38, K53, 75 to 79 (EGACS), and N92. The active-site Proton acceptor is Y140. K144 contributes to the NADP(+) binding site. N169 provides a ligand contact to substrate. V170 and K178 together coordinate NADP(+). K178 functions as the Proton acceptor in the catalytic mechanism. Residues S180, H187, 201-204 (FSGS), R209, and Y272 each bind substrate.

It belongs to the NAD(P)-dependent epimerase/dehydratase family. HldD subfamily. As to quaternary structure, homopentamer. The cofactor is NADP(+).

The enzyme catalyses ADP-D-glycero-beta-D-manno-heptose = ADP-L-glycero-beta-D-manno-heptose. It participates in nucleotide-sugar biosynthesis; ADP-L-glycero-beta-D-manno-heptose biosynthesis; ADP-L-glycero-beta-D-manno-heptose from D-glycero-beta-D-manno-heptose 7-phosphate: step 4/4. Its function is as follows. Catalyzes the interconversion between ADP-D-glycero-beta-D-manno-heptose and ADP-L-glycero-beta-D-manno-heptose via an epimerization at carbon 6 of the heptose. The chain is ADP-L-glycero-D-manno-heptose-6-epimerase from Pectobacterium atrosepticum (strain SCRI 1043 / ATCC BAA-672) (Erwinia carotovora subsp. atroseptica).